The primary structure comprises 145 residues: Basic phospholipase A2 PC16 (145 aa).

An N-terminal signal peptide occupies residues 1–21 (MYPAHLLLLLAVCVSLLGASA). Residues 22–27 (IPPLPL) constitute a propeptide that is removed on maturation. Cystine bridges form between C38–C98, C54–C144, C56–C72, C71–C125, C78–C118, C87–C111, and C105–C116. 3 residues coordinate Ca(2+): Y55, G57, and G59. H75 is a catalytic residue. D76 contributes to the Ca(2+) binding site. D119 is an active-site residue.

Belongs to the phospholipase A2 family. Group I subfamily. D49 sub-subfamily. The cofactor is Ca(2+).

The protein localises to the secreted. It carries out the reaction a 1,2-diacyl-sn-glycero-3-phosphocholine + H2O = a 1-acyl-sn-glycero-3-phosphocholine + a fatty acid + H(+). In terms of biological role, PLA2 catalyzes the calcium-dependent hydrolysis of the 2-acyl groups in 3-sn-phosphoglycerides. The chain is Basic phospholipase A2 PC16 from Laticauda laticaudata (Blue-ringed sea krait).